A 175-amino-acid chain; its full sequence is Nucleoside triphosphate/diphosphate phosphatase (175 aa).

Arg-23 (proton donor) is an active-site residue. Mg(2+)-binding residues include Asn-87, Asp-103, Asp-105, Asp-107, Asp-120, and Glu-123.

This sequence belongs to the Ntdp family. The cofactor is Mg(2+).

The enzyme catalyses a ribonucleoside 5'-triphosphate + H2O = a ribonucleoside 5'-diphosphate + phosphate + H(+). It catalyses the reaction a ribonucleoside 5'-diphosphate + H2O = a ribonucleoside 5'-phosphate + phosphate + H(+). Its function is as follows. Has nucleoside phosphatase activity towards nucleoside triphosphates and nucleoside diphosphates. This Listeria monocytogenes serotype 4b (strain CLIP80459) protein is Nucleoside triphosphate/diphosphate phosphatase.